Reading from the N-terminus, the 115-residue chain is Ribonuclease P protein component (115 aa).

It belongs to the RnpA family. Consists of a catalytic RNA component (M1 or rnpB) and a protein subunit.

The enzyme catalyses Endonucleolytic cleavage of RNA, removing 5'-extranucleotides from tRNA precursor.. RNaseP catalyzes the removal of the 5'-leader sequence from pre-tRNA to produce the mature 5'-terminus. It can also cleave other RNA substrates such as 4.5S RNA. The protein component plays an auxiliary but essential role in vivo by binding to the 5'-leader sequence and broadening the substrate specificity of the ribozyme. The polypeptide is Ribonuclease P protein component (Staphylococcus aureus (strain Mu3 / ATCC 700698)).